The chain runs to 918 residues: Dual serine/threonine and tyrosine protein kinase (918 aa).

Positions 1–19 (MQKDGTRSSRRMEEGDRRN) are enriched in basic and acidic residues. The tract at residues 1 to 29 (MQKDGTRSSRRMEEGDRRNGSTGSSGSVS) is disordered. Residues 643–897 (PRIGRELGRG…PLMGIVQPML (255 aa)) enclose the Protein kinase domain. ATP-binding positions include 649–657 (LGRGQYGVV) and Lys-672. Asp-768 functions as the Proton acceptor in the catalytic mechanism.

This sequence belongs to the protein kinase superfamily. Ser/Thr protein kinase family.

The protein localises to the cytoplasm. It localises to the cell membrane. The protein resides in the apical cell membrane. It is found in the basolateral cell membrane. Its subcellular location is the cell junction. The enzyme catalyses L-seryl-[protein] + ATP = O-phospho-L-seryl-[protein] + ADP + H(+). It carries out the reaction L-threonyl-[protein] + ATP = O-phospho-L-threonyl-[protein] + ADP + H(+). The catalysed reaction is L-tyrosyl-[protein] + ATP = O-phospho-L-tyrosyl-[protein] + ADP + H(+). In terms of biological role, may act as a positive regulator of ERK phosphorylation downstream of fibroblast growth factor-receptor activation. May induce both caspase-dependent apoptosis and caspase-independent cell death. May play a role in the embryonic development. In Xenopus tropicalis (Western clawed frog), this protein is Dual serine/threonine and tyrosine protein kinase (dstyk).